The chain runs to 369 residues: Phospho-N-acetylmuramoyl-pentapeptide-transferase (369 aa).

Transmembrane regions (helical) follow at residues 3 to 23 (ALLF…PLFI), 53 to 73 (GGIV…LLTW), 81 to 101 (VTPS…VGFL), 118 to 138 (WQKI…AITL), 162 to 182 (FMAL…CLIV), 198 to 218 (LAAG…FWQF), 240 to 260 (PLDL…FLWW), 267 to 287 (IFMG…LAIL), 290 to 310 (TELL…SVVL), and 347 to 367 (FWII…LEWI).

This sequence belongs to the glycosyltransferase 4 family. MraY subfamily. Mg(2+) is required as a cofactor.

Its subcellular location is the cell membrane. It catalyses the reaction UDP-N-acetyl-alpha-D-muramoyl-L-alanyl-gamma-D-glutamyl-meso-2,6-diaminopimeloyl-D-alanyl-D-alanine + di-trans,octa-cis-undecaprenyl phosphate = di-trans,octa-cis-undecaprenyl diphospho-N-acetyl-alpha-D-muramoyl-L-alanyl-D-glutamyl-meso-2,6-diaminopimeloyl-D-alanyl-D-alanine + UMP. Its pathway is cell wall biogenesis; peptidoglycan biosynthesis. Catalyzes the initial step of the lipid cycle reactions in the biosynthesis of the cell wall peptidoglycan: transfers peptidoglycan precursor phospho-MurNAc-pentapeptide from UDP-MurNAc-pentapeptide onto the lipid carrier undecaprenyl phosphate, yielding undecaprenyl-pyrophosphoryl-MurNAc-pentapeptide, known as lipid I. The protein is Phospho-N-acetylmuramoyl-pentapeptide-transferase of Clavibacter michiganensis subsp. michiganensis (strain NCPPB 382).